The following is a 307-amino-acid chain: Probable thioesterase KK1J (307 aa).

This sequence belongs to the AMT4 thioesterase family.

Its pathway is secondary metabolite biosynthesis. Its function is as follows. Probable thioesterase; part of the gene cluster that mediates the biosynthesis of KK-1, a novel cyclic depsipeptide with 10 residues which is a promising active compound with high activity against many plant pathogens, especially Botrytis cinerea. Within the pathway, kk1J is not essential for the biosynthesis of KK-1, but plays a role for efficient production via correction of peptide chain synthesis by kk1B. The nonribosomal peptide synthetase (NRPS) kk1B catalyzes the elongation and cyclization of the decapeptide chain composed of 1 D-lactic acid residue (D-Lac), 1 pipecolic acid residue (Pip), 1 aspartic acid residue (Asp), 1 isoleucine residue (Ile), 1 glycine residue (Gly), 1 tyrosine residue (Tyr) and 4 valine residues (Val). The Asp, Ile and 3 Val residues are N-methylated by the 5 methyltransferase domains from the NRPS (found in modules 3, 5, 6, 7 and 9), whereas the Tyr residue is O-methylated by the cluster encoded O-methyltransferase kk1A. The thioesterase kk1J is likely to be involved in the corrective mechanism of peptide chain synthesis. The D-lactate dehydrogenase kk1H is involved in the synthesis of D-lactic acid from pyruvic acid, which is recognized by the A domain of the first kk1B module. The pyrroline-5-carboxylate reductase kk1I is involved in the synthesis of the L-pipecolic acid residue of KK-1 from delta-1-pyrroline-5-carboxylate (P5C), a metabolic intermediate of lysine. It still is unclear how kk1C and kk1D are involved in the production of KK-1. The protein is Probable thioesterase KK1J of Curvularia clavata.